The sequence spans 193 residues: MFVAPAFAQEADHTAGETHTETGVAEGGHEGGFPPFLVETYPSQLLWLAITFGLFYLFLKRVVLPRIAGILEVRSDRIAQDLDQAARMKEDADAAVAAYEQELAEARKKAAAIAQEARDTAKAEAAAERRKVESGLDSKLKEAEARIALIKDTALSDVGTIAEETAAAIVQELVGGKVDKASLSAAVKAVQQQ.

Residues 9 to 28 are disordered; sequence QEADHTAGETHTETGVAEGG. Positions 10 to 20 are enriched in basic and acidic residues; sequence EADHTAGETHT. The helical transmembrane segment at 40-59 threads the bilayer; sequence TYPSQLLWLAITFGLFYLFL.

It belongs to the ATPase B chain family. F-type ATPases have 2 components, F(1) - the catalytic core - and F(0) - the membrane proton channel. F(1) has five subunits: alpha(3), beta(3), gamma(1), delta(1), epsilon(1). F(0) has three main subunits: a(1), b(2) and c(10-14). The alpha and beta chains form an alternating ring which encloses part of the gamma chain. F(1) is attached to F(0) by a central stalk formed by the gamma and epsilon chains, while a peripheral stalk is formed by the delta and b chains.

It localises to the cell inner membrane. Its function is as follows. F(1)F(0) ATP synthase produces ATP from ADP in the presence of a proton or sodium gradient. F-type ATPases consist of two structural domains, F(1) containing the extramembraneous catalytic core and F(0) containing the membrane proton channel, linked together by a central stalk and a peripheral stalk. During catalysis, ATP synthesis in the catalytic domain of F(1) is coupled via a rotary mechanism of the central stalk subunits to proton translocation. In terms of biological role, component of the F(0) channel, it forms part of the peripheral stalk, linking F(1) to F(0). This chain is ATP synthase subunit b 1, found in Chelativorans sp. (strain BNC1).